Reading from the N-terminus, the 571-residue chain is Proline--tRNA ligase (571 aa).

It belongs to the class-II aminoacyl-tRNA synthetase family. ProS type 1 subfamily. As to quaternary structure, homodimer.

Its subcellular location is the cytoplasm. It catalyses the reaction tRNA(Pro) + L-proline + ATP = L-prolyl-tRNA(Pro) + AMP + diphosphate. Functionally, catalyzes the attachment of proline to tRNA(Pro) in a two-step reaction: proline is first activated by ATP to form Pro-AMP and then transferred to the acceptor end of tRNA(Pro). As ProRS can inadvertently accommodate and process non-cognate amino acids such as alanine and cysteine, to avoid such errors it has two additional distinct editing activities against alanine. One activity is designated as 'pretransfer' editing and involves the tRNA(Pro)-independent hydrolysis of activated Ala-AMP. The other activity is designated 'posttransfer' editing and involves deacylation of mischarged Ala-tRNA(Pro). The misacylated Cys-tRNA(Pro) is not edited by ProRS. In Ligilactobacillus salivarius (strain UCC118) (Lactobacillus salivarius), this protein is Proline--tRNA ligase.